The following is a 394-amino-acid chain: Succinate--CoA ligase [ADP-forming] subunit beta 1 (394 aa).

Positions 9–237 (RDLFAKHDVP…KAAANPLEAA (229 aa)) constitute an ATP-grasp domain. ATP is bound by residues Lys-45, 52–54 (GRG), Glu-92, Pro-95, and Glu-100. The Mg(2+) site is built by Asn-192 and Asp-206. Substrate contacts are provided by residues Asn-257 and 319–321 (GIT).

Belongs to the succinate/malate CoA ligase beta subunit family. In terms of assembly, heterotetramer of two alpha and two beta subunits. The cofactor is Mg(2+).

It catalyses the reaction succinate + ATP + CoA = succinyl-CoA + ADP + phosphate. The catalysed reaction is GTP + succinate + CoA = succinyl-CoA + GDP + phosphate. It participates in carbohydrate metabolism; tricarboxylic acid cycle; succinate from succinyl-CoA (ligase route): step 1/1. Its function is as follows. Succinyl-CoA synthetase functions in the citric acid cycle (TCA), coupling the hydrolysis of succinyl-CoA to the synthesis of either ATP or GTP and thus represents the only step of substrate-level phosphorylation in the TCA. The beta subunit provides nucleotide specificity of the enzyme and binds the substrate succinate, while the binding sites for coenzyme A and phosphate are found in the alpha subunit. The chain is Succinate--CoA ligase [ADP-forming] subunit beta 1 from Streptomyces coelicolor (strain ATCC BAA-471 / A3(2) / M145).